The primary structure comprises 281 residues: Voltage-dependent L-type calcium channel subunit alpha-1S (281 aa).

The III repeat unit spans residues 1–8; it reads VGFVIVTF. Residues 1–17 form a dihydropyridine binding region; that stretch reads VGFVIVTFQEQGESEYK. The IV repeat unit spans residues 45 to 281; the sequence is NPYQYQIWYV…TCGTGFAYFY (237 aa). A helical membrane pass occupies residues 59 to 80; the sequence is YFEYLMFFLIMLNTICLGMQHY. Asn81 carries N-linked (GlcNAc...) asparagine glycosylation. Residues 89–110 traverse the membrane as a helical segment; the sequence is VSDILNVAFTVLFTLEMILKLM. The helical transmembrane segment at 121 to 140 threads the bilayer; it reads PWNVFDFLIVIGSIIDVILS. The chain crosses the membrane as a helical span at residues 153 to 171; the sequence is ITFFRLFRVMRLVKLLSRG. A helical transmembrane segment spans residues 190-210; that stretch reads YVALLIVMLFFIYAVIGMQMF. The pore-forming intramembrane region spans 233-251; it reads AVLLLFRCATGEAWQEILL. Residues 242–245 carry the Selectivity filter of repeat IV motif; the sequence is TGEA. Positions 258–281 are dihydropyridine binding; sequence RCDPESDYAEGEEYTCGTGFAYFY. A disulfide bridge connects residues Cys259 and Cys273. Residues 270–281 are phenylalkylamine binding; sequence EYTCGTGFAYFY.

Belongs to the calcium channel alpha-1 subunit (TC 1.A.1.11) family. CACNA1S subfamily. Component of a calcium channel complex consisting of a pore-forming alpha subunit (CACNA1S) and the ancillary subunits CACNB1 or CACNB2, CACNG1 and CACNA2D1. The channel complex contains alpha, beta, gamma and delta subunits in a 1:1:1:1 ratio, i.e. it contains either CACNB1 or CACNB2. CACNA1S channel activity is modulated by the auxiliary subunits (CACNB1 or CACNB2, CACNG1 and CACNA2D1). Interacts with DYSF and JSRP1. Interacts with RYR1. Interacts with CALM. Post-translationally, the alpha-1S subunit is found in two isoforms in the skeletal muscle: a minor form of 212 kDa containing the complete amino acid sequence, and a major form of 190 kDa derived from the full-length form by post-translational proteolysis close to Phe-1690. In terms of processing, both the minor and major forms are phosphorylated in vitro by PKA. Phosphorylation by PKA activates the calcium channel.

The protein localises to the cell membrane. It is found in the sarcolemma. The protein resides in the T-tubule. The enzyme catalyses Ca(2+)(in) = Ca(2+)(out). Its activity is regulated as follows. Channel activity is blocked by dihydropyridines (DHP), phenylalkylamines, and by benzothiazepines. In terms of biological role, pore-forming, alpha-1S subunit of the voltage-gated calcium channel that gives rise to L-type calcium currents in skeletal muscle. Calcium channels containing the alpha-1S subunit play an important role in excitation-contraction coupling in skeletal muscle via their interaction with RYR1, which triggers Ca(2+) release from the sarcplasmic reticulum and ultimately results in muscle contraction. Long-lasting (L-type) calcium channels belong to the 'high-voltage activated' (HVA) group. This Gallus gallus (Chicken) protein is Voltage-dependent L-type calcium channel subunit alpha-1S (CACNA1S).